The following is a 432-amino-acid chain: tRNA(Ile)-lysidine synthase (432 aa).

19–24 serves as a coordination point for ATP; it reads STGIDS.

The protein belongs to the tRNA(Ile)-lysidine synthase family.

Its subcellular location is the cytoplasm. The enzyme catalyses cytidine(34) in tRNA(Ile2) + L-lysine + ATP = lysidine(34) in tRNA(Ile2) + AMP + diphosphate + H(+). Ligates lysine onto the cytidine present at position 34 of the AUA codon-specific tRNA(Ile) that contains the anticodon CAU, in an ATP-dependent manner. Cytidine is converted to lysidine, thus changing the amino acid specificity of the tRNA from methionine to isoleucine. This chain is tRNA(Ile)-lysidine synthase, found in Staphylococcus epidermidis (strain ATCC 35984 / DSM 28319 / BCRC 17069 / CCUG 31568 / BM 3577 / RP62A).